Reading from the N-terminus, the 539-residue chain is AT-rich interactive domain-containing protein 3A (539 aa).

The tract at residues 1-190 (MKLQAVMETL…PLSGHPQLQD (190 aa)) is disordered. Residues 55–73 (LKIQRAQAAALAAMRAAAA) are compositionally biased toward low complexity. The segment covering 84-100 (SEEEDGESMASDEEDEK) has biased composition (acidic residues). The span at 101–110 (ERDGESERYQ) shows a compositional bias: basic and acidic residues. A compositionally biased stretch (acidic residues) spans 113–141 (ASEEEDLKGKWDEDDFEDEGEDEYEDMEE). The span at 161 to 173 (HSSQQAFPSQRSQ) shows a compositional bias: polar residues. One can recognise an ARID domain in the interval 209–301 (DPKRKEFLDD…YLYPYECEKR (93 aa)). Residues 404 to 499 (AALEQLREKL…GVLFAQPPTS (96 aa)) form the REKLES domain. The important for nuclear localization stretch occupies residues 405-448 (ALEQLREKLESGEPPEKKMALGSEEQQRIIQRTIQHNLLAMTAQ). Residues 450–471 (PMNIRINSQAEGRQDSAVNLTT) are homodimerization. Residues 495-502 (QPPTSASG) form an important for cytoplasmic localization region. Residues 497-512 (PTSASGTSKGSSNRTG) are compositionally biased toward polar residues. The tract at residues 497–539 (PTSASGTSKGSSNRTGSIGGGSSNSQAAPPSTPSAPNSNNPSP) is disordered. The segment covering 519 to 539 (SNSQAAPPSTPSAPNSNNPSP) has biased composition (low complexity).

Homodimer.

It is found in the nucleus. The protein resides in the cytoplasm. In terms of biological role, transcription factor required for smad1 and smad2-mediated responses to TGFbeta during mesoderm induction. The protein is AT-rich interactive domain-containing protein 3A (arid3a) of Xenopus laevis (African clawed frog).